The chain runs to 1424 residues: ABC multidrug transporter H (1424 aa).

Positions 1-49 are disordered; sequence MEDQGHLPSEPRALFDRRDDTDSTNTALDETDLSRTPLQDTSHTPHAED. Residues 23–42 show a composition bias toward polar residues; the sequence is STNTALDETDLSRTPLQDTS. N-linked (GlcNAc...) asparagine glycosylation is found at asparagine 79 and asparagine 275. The region spanning 96 to 351 is the ABC transporter 1 domain; that stretch reads LSQFNIPQHI…MEEQGFVCRE (256 aa). 7 helical membrane-spanning segments follow: residues 488–508, 520–540, 544–564, 569–589, 605–625, 629–649, and 710–730; these read GLFI…LLAM, VLIK…IAQI, IPVL…MVGL, GAFF…TALF, VSGF…PYHA, WFIW…LLSI, and NFGI…IATS. The segment at 760 to 782 is disordered; the sequence is EEAQLNEKAGHKGTGTDSEAQSN. Asparagine 790 and asparagine 798 each carry an N-linked (GlcNAc...) asparagine glycan. Positions 794–1037 constitute an ABC transporter 2 domain; it reads FTWKNLTYTV…VKDYFARYGA (244 aa). Residue 830-837 coordinates ATP; it reads GSSGAGKT. The next 4 helical transmembrane spans lie at 1131-1151, 1161-1181, 1200-1220, and 1240-1260; these read IALH…IGDS, TIFN…PLFI, VAFV…CAVL, and AIFF…QFIA. An N-linked (GlcNAc...) asparagine glycan is attached at asparagine 1265. A run of 2 helical transmembrane segments spans residues 1268 to 1288 and 1300 to 1320; these read FAAL…GVLV and WIYW…FSVF. N-linked (GlcNAc...) asparagine glycosylation is present at asparagine 1338. Residues 1395–1415 traverse the membrane as a helical segment; it reads TAIVCIFVLSSYALVYALMKL.

Belongs to the ABC transporter superfamily. ABCG family. PDR (TC 3.A.1.205) subfamily.

The protein localises to the cell membrane. With respect to regulation, the efflux inhibitor FK506 impairs the transport activity. Functionally, ABC efflux transporter that is able to transport rhodamine 6G (R-6G), a known substrate for many ABC transporters, but seems not to transport azoles. The sequence is that of ABC multidrug transporter H from Aspergillus fumigatus (strain ATCC MYA-4609 / CBS 101355 / FGSC A1100 / Af293) (Neosartorya fumigata).